We begin with the raw amino-acid sequence, 450 residues long: Glucose-6-phosphate isomerase (450 aa).

Thr-39 bears the Phosphothreonine mark. The active-site Proton donor is Glu-291. Active-site residues include His-312 and Lys-426.

It belongs to the GPI family.

It localises to the cytoplasm. It carries out the reaction alpha-D-glucose 6-phosphate = beta-D-fructose 6-phosphate. It participates in carbohydrate biosynthesis; gluconeogenesis. Its pathway is carbohydrate degradation; glycolysis; D-glyceraldehyde 3-phosphate and glycerone phosphate from D-glucose: step 2/4. Catalyzes the reversible isomerization of glucose-6-phosphate to fructose-6-phosphate. In Bacillus cereus (strain G9842), this protein is Glucose-6-phosphate isomerase.